We begin with the raw amino-acid sequence, 434 residues long: Nuclear envelope integral membrane protein 1b (434 aa).

An N-terminal signal peptide occupies residues 1–29 (MAGEVEGRGCGFSLGVLVTLLVLPLPSLC). 5 helical membrane passes run 151–171 (PRLFFVFLCGLLLFFYGDTLS), 175–195 (LFFYSTGITVGMLASMLILVF), 206–226 (PFFALLLGGWSVSIYVIQLVF), 239–259 (YLIVYLGIVGFVSFAFCYIYG), and 280–300 (LLMYVSVQIQHIAVTIVVIAF). Residues 176–287 (FFYSTGITVG…GLLLMYVSVQ (112 aa)) are a; required for its colocalization with lamins at the nuclear envelope. The Nuclear localization signal motif lies at 317 to 325 (RKIKLKRAK). Residues 326–395 (PGPPRLLTEE…LTPNEVSVHE (70 aa)) are b; interaction with ran. The interval 326 to 434 (PGPPRLLTEE…PLYPIPRSVF (109 aa)) is interaction with banf1-a and banf1-b. Residues 368-375 (SRIQSPKR) form a BAF-binding site (BBS); essential for interaction with banf1-a, banf1-b and ran region.

The protein belongs to the NEMP family. As to quaternary structure, interacts with banf1-a and banf1-b. Interacts with ran-gtp. Phosphorylated.

Its subcellular location is the nucleus inner membrane. It is found in the nucleus envelope. In concert with ran, required for proper eye development. May be involved in the expression of early eye marker genes. Contributes to nuclear envelope stiffness in germ cells. Required for fertility. Essential for normal erythropoiesis. Required for efficient nuclear envelope opening and enucleation during the late stages of erythroblast maturation. The polypeptide is Nuclear envelope integral membrane protein 1b (nemp1b) (Xenopus laevis (African clawed frog)).